A 648-amino-acid polypeptide reads, in one-letter code: MTPLLELKDIRRSYPAGDEQVEVLKGITLDIYAGEMVAIVGASGSGKSTLMNILGCLDKATSGTYRVAGQDVATLDADALAQLRREHFGFIFQRYHLLSHLTAEQNVEVPAVYAGLERKQRLLRAQELLQRLGLEDRTEYYPAQLSGGQQQRVSIARALMNGGQVILADEPTGALDSHSCEQVMAILHQLRDRGHTVIIVTHDPQVAAQAERVIEIRDGEIVRNPPAIEKVNVAGGTEPVVNTASGWRQFVSGFNEALTMAWRALAANKMRTLLTMLGIIIGIASVVSIVVVGDAAKQMVLADIRSIGTNTIDVYPGKDFGDDDPQYQQALKYDDLIAIQKQPWVASATPAVSQNLRLRYNNVDVAASANGVSGDYFNVYGMTFSEGNTFNQEQLNGRAQVVVLDSNTRRQLFPHKADVVGEVILVGNMPARVIGVAEEKQSMFGSSKVLRVWLPYSTMSGRVMGQSWLNSITVRVKEGFDSAEAEQQLTRLLSLRHGKKDFFTWNMDGVLKTVEKTTRTLQLFMTLVAVISLVVGGIGVMNIMLVSVTERTREIGIRMAVGARASDVLQQFLIEAVLVCLVGGALGITLSLLIAFTLQLFLPGWEIGFSPLALLLAFLCSTVTGILFGWLPARNAARLDPVDALARE.

The ABC transporter domain maps to 5-243; it reads LELKDIRRSY…AGGTEPVVNT (239 aa). An ATP-binding site is contributed by 41-48; the sequence is GASGSGKS. The next 4 membrane-spanning stretches (helical) occupy residues 273 to 293, 523 to 543, 576 to 596, and 611 to 631; these read LLTM…VVVG, LFMT…VMNI, AVLV…LIAF, and PLAL…FGWL.

It belongs to the ABC transporter superfamily. Macrolide exporter (TC 3.A.1.122) family. In terms of assembly, homodimer. Part of the tripartite efflux system MacAB-TolC, which is composed of an inner membrane transporter, MacB, a periplasmic membrane fusion protein, MacA, and an outer membrane component, TolC. The complex forms a large protein conduit and can translocate molecules across both the inner and outer membranes. Interacts with MacA.

The protein resides in the cell inner membrane. Part of the tripartite efflux system MacAB-TolC. MacB is a non-canonical ABC transporter that contains transmembrane domains (TMD), which form a pore in the inner membrane, and an ATP-binding domain (NBD), which is responsible for energy generation. Confers resistance against macrolides. The protein is Macrolide export ATP-binding/permease protein MacB of Escherichia coli O157:H7.